The primary structure comprises 919 residues: Isoleucine--tRNA ligase (919 aa).

The 'HIGH' region motif lies at 57-67 (PYANGNIHIGH). Glu-569 serves as a coordination point for L-isoleucyl-5'-AMP. A 'KMSKS' region motif is present at residues 610–614 (KMSKS). Position 613 (Lys-613) interacts with ATP. Residues Cys-896, Cys-899, Cys-911, and Cys-914 each coordinate Zn(2+).

Belongs to the class-I aminoacyl-tRNA synthetase family. IleS type 1 subfamily. Monomer. Requires Zn(2+) as cofactor.

The protein resides in the cytoplasm. The catalysed reaction is tRNA(Ile) + L-isoleucine + ATP = L-isoleucyl-tRNA(Ile) + AMP + diphosphate. Functionally, catalyzes the attachment of isoleucine to tRNA(Ile). As IleRS can inadvertently accommodate and process structurally similar amino acids such as valine, to avoid such errors it has two additional distinct tRNA(Ile)-dependent editing activities. One activity is designated as 'pretransfer' editing and involves the hydrolysis of activated Val-AMP. The other activity is designated 'posttransfer' editing and involves deacylation of mischarged Val-tRNA(Ile). This is Isoleucine--tRNA ligase from Aliarcobacter butzleri (strain RM4018) (Arcobacter butzleri).